A 312-amino-acid chain; its full sequence is Methionyl-tRNA formyltransferase (312 aa).

A (6S)-5,6,7,8-tetrahydrofolate-binding site is contributed by 117–120 (SLLP).

This sequence belongs to the Fmt family.

The catalysed reaction is L-methionyl-tRNA(fMet) + (6R)-10-formyltetrahydrofolate = N-formyl-L-methionyl-tRNA(fMet) + (6S)-5,6,7,8-tetrahydrofolate + H(+). Attaches a formyl group to the free amino group of methionyl-tRNA(fMet). The formyl group appears to play a dual role in the initiator identity of N-formylmethionyl-tRNA by promoting its recognition by IF2 and preventing the misappropriation of this tRNA by the elongation apparatus. This is Methionyl-tRNA formyltransferase from Bordetella pertussis (strain Tohama I / ATCC BAA-589 / NCTC 13251).